A 75-amino-acid chain; its full sequence is UPF0352 protein VP2129 (75 aa).

It belongs to the UPF0352 family.

In Vibrio parahaemolyticus serotype O3:K6 (strain RIMD 2210633), this protein is UPF0352 protein VP2129.